A 463-amino-acid chain; its full sequence is Glutamate--tRNA ligase (463 aa).

Residues 10 to 20 (PSPTGHLHIGG) carry the 'HIGH' region motif. A 'KMSKS' region motif is present at residues 236–240 (KLSKR). Lys-239 is a binding site for ATP.

It belongs to the class-I aminoacyl-tRNA synthetase family. Glutamate--tRNA ligase type 1 subfamily. In terms of assembly, monomer.

It localises to the cytoplasm. It carries out the reaction tRNA(Glu) + L-glutamate + ATP = L-glutamyl-tRNA(Glu) + AMP + diphosphate. Its function is as follows. Catalyzes the attachment of glutamate to tRNA(Glu) in a two-step reaction: glutamate is first activated by ATP to form Glu-AMP and then transferred to the acceptor end of tRNA(Glu). The polypeptide is Glutamate--tRNA ligase (Nitratidesulfovibrio vulgaris (strain ATCC 29579 / DSM 644 / CCUG 34227 / NCIMB 8303 / VKM B-1760 / Hildenborough) (Desulfovibrio vulgaris)).